We begin with the raw amino-acid sequence, 102 residues long: Small ribosomal subunit protein uS10 (102 aa).

The protein belongs to the universal ribosomal protein uS10 family. In terms of assembly, part of the 30S ribosomal subunit.

Functionally, involved in the binding of tRNA to the ribosomes. The polypeptide is Small ribosomal subunit protein uS10 (Finegoldia magna (strain ATCC 29328 / DSM 20472 / WAL 2508) (Peptostreptococcus magnus)).